Consider the following 248-residue polypeptide: Putative insertion sequence ATP-binding protein y4uH (248 aa).

106–113 contacts ATP; sequence GPTGIGKS.

The protein belongs to the IS21/IS1162 putative ATP-binding protein family.

The protein is Putative insertion sequence ATP-binding protein y4uH of Sinorhizobium fredii (strain NBRC 101917 / NGR234).